Reading from the N-terminus, the 253-residue chain is Bridging integrator 3 (253 aa).

The region spanning 9-232 (GQPKKQIVSK…LDQPGHSDEH (224 aa)) is the BAR domain. 2 coiled-coil regions span residues 16–57 (VSKT…AMSK) and 120–151 (SLNMAVKRREQALQDYGRLQAKVEKYEEKEKT).

Its subcellular location is the cytoplasm. The protein localises to the cytoskeleton. Its function is as follows. Involved in cytokinesis and septation where it has a role in the localization of F-actin. In Rattus norvegicus (Rat), this protein is Bridging integrator 3 (Bin3).